The sequence spans 956 residues: UvrABC system protein A (956 aa).

33–40 (GLSGSGKS) contacts ATP. Residues 252-279 (CPYCGFSVGELEPRMFSFNSPFGACPTC) form a C4-type zinc finger. 2 ABC transporter domains span residues 309-587 (WRPI…KNSI) and 607-936 (GNGL…KYLK). 639-646 (GVSGSGKS) provides a ligand contact to ATP. A C4-type zinc finger spans residues 738-764 (CEACKGDGIIKIEMHFLPDVYVPCEVC).

It belongs to the ABC transporter superfamily. UvrA family. As to quaternary structure, forms a heterotetramer with UvrB during the search for lesions.

The protein localises to the cytoplasm. Functionally, the UvrABC repair system catalyzes the recognition and processing of DNA lesions. UvrA is an ATPase and a DNA-binding protein. A damage recognition complex composed of 2 UvrA and 2 UvrB subunits scans DNA for abnormalities. When the presence of a lesion has been verified by UvrB, the UvrA molecules dissociate. The sequence is that of UvrABC system protein A from Listeria innocua serovar 6a (strain ATCC BAA-680 / CLIP 11262).